A 104-amino-acid chain; its full sequence is MSWIILFVAGLLEIVWAVGLKYTHGFTRLTPSIITISAMIVSMGMLSYAMKGLPAGTAYAIWTGIGAVGTAIFGIIVFGESANIYRLLSLAMIVFGIIGLKLAS.

Over 1-3 (MSW) the chain is Cytoplasmic. A helical membrane pass occupies residues 4–26 (IILFVAGLLEIVWAVGLKYTHGF). The Periplasmic portion of the chain corresponds to 27-32 (TRLTPS). The chain crosses the membrane as a helical span at residues 33–50 (IITISAMIVSMGMLSYAM). Topologically, residues 51 to 54 (KGLP) are cytoplasmic. The helical transmembrane segment at 55-77 (AGTAYAIWTGIGAVGTAIFGIIV) threads the bilayer. Residues 78–83 (FGESAN) lie on the Periplasmic side of the membrane. The helical transmembrane segment at 84 to 103 (IYRLLSLAMIVFGIIGLKLA) threads the bilayer. Serine 104 is a topological domain (cytoplasmic).

Belongs to the drug/metabolite transporter (DMT) superfamily. Small multidrug resistance (SMR) (TC 2.A.7.1) family. Gdx/SugE subfamily.

Its subcellular location is the cell inner membrane. Functionally, guanidinium ion exporter. Couples guanidinium export to the proton motive force, exchanging one guanidinium ion for two protons. The protein is Guanidinium exporter of Proteus vulgaris.